The primary structure comprises 61 residues: Small ribosomal subunit protein uS14B (61 aa).

Zn(2+) is bound by residues cysteine 24, cysteine 27, cysteine 40, and cysteine 43.

The protein belongs to the universal ribosomal protein uS14 family. Zinc-binding uS14 subfamily. Part of the 30S ribosomal subunit. Contacts proteins S3 and S10. It depends on Zn(2+) as a cofactor.

Its function is as follows. Binds 16S rRNA, required for the assembly of 30S particles and may also be responsible for determining the conformation of the 16S rRNA at the A site. This chain is Small ribosomal subunit protein uS14B, found in Mycobacterium bovis (strain ATCC BAA-935 / AF2122/97).